A 213-amino-acid chain; its full sequence is ATP-dependent Clp protease proteolytic subunit (213 aa).

The active-site Nucleophile is the Ser-114. His-139 is a catalytic residue.

It belongs to the peptidase S14 family. As to quaternary structure, fourteen ClpP subunits assemble into 2 heptameric rings which stack back to back to give a disk-like structure with a central cavity, resembling the structure of eukaryotic proteasomes.

It localises to the cytoplasm. It catalyses the reaction Hydrolysis of proteins to small peptides in the presence of ATP and magnesium. alpha-casein is the usual test substrate. In the absence of ATP, only oligopeptides shorter than five residues are hydrolyzed (such as succinyl-Leu-Tyr-|-NHMec, and Leu-Tyr-Leu-|-Tyr-Trp, in which cleavage of the -Tyr-|-Leu- and -Tyr-|-Trp bonds also occurs).. Cleaves peptides in various proteins in a process that requires ATP hydrolysis. Has a chymotrypsin-like activity. Plays a major role in the degradation of misfolded proteins. This chain is ATP-dependent Clp protease proteolytic subunit, found in Pseudomonas putida (strain GB-1).